Reading from the N-terminus, the 462-residue chain is 2-(3-amino-3-carboxypropyl)histidine synthase subunit 1 (462 aa).

A disordered region spans residues 1–87; it reads MEEDRRQTDL…AVATAKPRRA (87 aa). Polar residues predominate over residues 35–44; sequence ESAAQTQNGA. Residues Cys173, Cys276, and Cys406 each coordinate [4Fe-4S] cluster.

This sequence belongs to the DPH1/DPH2 family. DPH1 subfamily. As to quaternary structure, component of the 2-(3-amino-3-carboxypropyl)histidine synthase complex composed of DPH1, DPH2, DPH3 and a NADH-dependent reductase, predominantly CBR1. [4Fe-4S] cluster is required as a cofactor.

The protein resides in the cytoplasm. The catalysed reaction is L-histidyl-[translation elongation factor 2] + S-adenosyl-L-methionine = 2-[(3S)-amino-3-carboxypropyl]-L-histidyl-[translation elongation factor 2] + S-methyl-5'-thioadenosine + H(+). It participates in protein modification; peptidyl-diphthamide biosynthesis. Its function is as follows. Catalyzes the first step of diphthamide biosynthesis, a post-translational modification of histidine which occurs in elongation factor 2. DPH1 and DPH2 transfer a 3-amino-3-carboxypropyl (ACP) group from S-adenosyl-L-methionine (SAM) to a histidine residue, the reaction is assisted by a reduction system comprising DPH3 and a NADH-dependent reductase, predominantly CBR1. This chain is 2-(3-amino-3-carboxypropyl)histidine synthase subunit 1 (DPH1), found in Gibberella zeae (strain ATCC MYA-4620 / CBS 123657 / FGSC 9075 / NRRL 31084 / PH-1) (Wheat head blight fungus).